Reading from the N-terminus, the 388-residue chain is Transcriptional regulatory protein EmbR (388 aa).

Residues 2–105 (AGSATVEKRL…AAPPGYRLSI (104 aa)) constitute a DNA-binding region (ompR/PhoB-type). Residues 308–357 (TRIGRLHDNDIVLDSANVSRHHAVIVDTGTNYVINDLRSSNGVHVQHERI) enclose the FHA domain.

This sequence belongs to the AfsR/DnrI/RedD regulatory family. Phosphorylated on threonine residue(s).

Positively regulates the transcription of the embCAB operon. Exhibits ATPase and GTPase activities. This chain is Transcriptional regulatory protein EmbR (embR), found in Mycobacterium bovis (strain ATCC BAA-935 / AF2122/97).